The chain runs to 513 residues: Maturase K (513 aa).

This sequence belongs to the intron maturase 2 family. MatK subfamily.

Its subcellular location is the plastid. It is found in the chloroplast. In terms of biological role, usually encoded in the trnK tRNA gene intron. Probably assists in splicing its own and other chloroplast group II introns. This is Maturase K from Saccharum officinarum (Sugarcane).